The following is a 142-amino-acid chain: MKTYQAKESEVAREWYLIDAEGQVLGRMASEIARRLRGKHKPEYTPHVDTGDFIVVVNAEKMVLTGKKLRDKIYYHHSGYPGGLKEKTAGKMMQEKPTDVLWLAVKGMLPKNSLGRRMLRKLKVYAGNDHRHEAQCPKVLPL.

Belongs to the universal ribosomal protein uL13 family. As to quaternary structure, part of the 50S ribosomal subunit.

Functionally, this protein is one of the early assembly proteins of the 50S ribosomal subunit, although it is not seen to bind rRNA by itself. It is important during the early stages of 50S assembly. The chain is Large ribosomal subunit protein uL13 from Syntrophus aciditrophicus (strain SB).